A 579-amino-acid chain; its full sequence is YTH domain-containing family protein 2 (579 aa).

The disordered stretch occupies residues 1-45 (MSASSLLEQRPKGQGNKVQNGSVHQKDGLNDDDFEPYLSPQARPN). Serine 2 bears the N-acetylserine mark. Phosphoserine occurs at positions 2, 4, 5, 22, 39, and 196. A localization to mRNA processing bodies (P-bodies) region spans residues 2-384 (SASSLLEQRP…QAGSGSTPSE (383 aa)). The interval 247–387 (AKQQPKLKTK…SGSTPSEPHP (141 aa)) is disordered. The span at 291 to 316 (ALVQNIGQPTQGSPQHVGQQANNSPP) shows a compositional bias: polar residues. Positions 337–349 (AQLSVQQQAAQPT) are enriched in low complexity. A Phosphoserine modification is found at serine 359. The segment covering 359–371 (SGFGHNGVDGNGV) has biased composition (gly residues). Over residues 372 to 383 (GQSQAGSGSTPS) the composition is skewed to polar residues. An interaction with m6A-containing mRNAs region spans residues 385–579 (PHPVLEKLRS…VKKERQGRGK (195 aa)). A Phosphoserine modification is found at serine 394. Residues 410–544 (GRVFIIKSYS…EKAKQVLKII (135 aa)) enclose the YTH domain. RNA is bound by residues 416–418 (KSY), aspartate 422, 432–433 (WC), asparagine 462, tryptophan 486, and tryptophan 491.

The protein belongs to the YTHDF family. YTHDF2 subfamily. In terms of assembly, interacts with CNOT1; interaction is direct and promotes recruitment of the CCR4-NOT complex. Interacts with YTHDF3. Interacts with RIDA/HRSP12; interaction leads to recruitment of the ribonuclease P/MRP complex. In terms of processing, ubiquitinated by the SCF(SKP2) complex, leading to its degradation.

The protein resides in the cytoplasm. The protein localises to the cytosol. Its subcellular location is the P-body. It is found in the stress granule. It localises to the nucleus. In terms of biological role, specifically recognizes and binds N6-methyladenosine (m6A)-containing RNAs, and regulates their stability. M6A is a modification present at internal sites of mRNAs and some non-coding RNAs and plays a role in mRNA stability and processing. Acts as a regulator of mRNA stability by promoting degradation of m6A-containing mRNAs via interaction with the CCR4-NOT and ribonuclease P/MRP complexes, depending on the context. The YTHDF paralogs (YTHDF1, YTHDF2 and YTHDF3) share m6A-containing mRNAs targets and act redundantly to mediate mRNA degradation and cellular differentiation. M6A-containing mRNAs containing a binding site for RIDA/HRSP12 (5'-GGUUC-3') are preferentially degraded by endoribonucleolytic cleavage: cooperative binding of RIDA/HRSP12 and YTHDF2 to transcripts leads to recruitment of the ribonuclease P/MRP complex. Other m6A-containing mRNAs undergo deadenylation via direct interaction between YTHDF2 and CNOT1, leading to recruitment of the CCR4-NOT and subsequent deadenylation of m6A-containing mRNAs. Required maternally to regulate oocyte maturation: probably acts by binding to m6A-containing mRNAs, thereby regulating maternal transcript dosage during oocyte maturation, which is essential for the competence of oocytes to sustain early zygotic development. Also required during spermatogenesis: regulates spermagonial adhesion by promoting degradation of m6A-containing transcripts coding for matrix metallopeptidases. Also involved in hematopoietic stem cells specification by binding to m6A-containing mRNAs, leading to promote their degradation. Also acts as a regulator of neural development by promoting m6A-dependent degradation of neural development-related mRNA targets. Inhibits neural specification of induced pluripotent stem cells by binding to methylated neural-specific mRNAs and promoting their degradation, thereby restraining neural differentiation. Regulates circadian regulation of hepatic lipid metabolism: acts by promoting m6A-dependent degradation of PPARA transcripts. Regulates the innate immune response to infection by inhibiting the type I interferon response: acts by binding to m6A-containing IFNB transcripts and promoting their degradation. May also act as a promoter of cap-independent mRNA translation following heat shock stress: upon stress, relocalizes to the nucleus and specifically binds mRNAs with some m6A methylation mark at their 5'-UTR, protecting demethylation of mRNAs by FTO, thereby promoting cap-independent mRNA translation. Regulates mitotic entry by promoting the phase-specific m6A-dependent degradation of WEE1 transcripts. Promotes formation of phase-separated membraneless compartments, such as P-bodies or stress granules, by undergoing liquid-liquid phase separation upon binding to mRNAs containing multiple m6A-modified residues: polymethylated mRNAs act as a multivalent scaffold for the binding of YTHDF proteins, juxtaposing their disordered regions and thereby leading to phase separation. The resulting mRNA-YTHDF complexes then partition into different endogenous phase-separated membraneless compartments, such as P-bodies, stress granules or neuronal RNA granules. May also recognize and bind RNAs modified by C5-methylcytosine (m5C) and act as a regulator of rRNA processing. The sequence is that of YTH domain-containing family protein 2 from Macaca fascicularis (Crab-eating macaque).